The following is a 256-amino-acid chain: Deoxyribose-phosphate aldolase (256 aa).

Asp102 acts as the Proton donor/acceptor in catalysis. Lys165 serves as the catalytic Schiff-base intermediate with acetaldehyde. The Proton donor/acceptor role is filled by Lys197.

This sequence belongs to the DeoC/FbaB aldolase family. DeoC type 2 subfamily.

It is found in the cytoplasm. It catalyses the reaction 2-deoxy-D-ribose 5-phosphate = D-glyceraldehyde 3-phosphate + acetaldehyde. It functions in the pathway carbohydrate degradation; 2-deoxy-D-ribose 1-phosphate degradation; D-glyceraldehyde 3-phosphate and acetaldehyde from 2-deoxy-alpha-D-ribose 1-phosphate: step 2/2. Catalyzes a reversible aldol reaction between acetaldehyde and D-glyceraldehyde 3-phosphate to generate 2-deoxy-D-ribose 5-phosphate. The sequence is that of Deoxyribose-phosphate aldolase from Shewanella baltica (strain OS155 / ATCC BAA-1091).